Consider the following 147-residue polypeptide: Hemoglobin subunit delta (147 aa).

In terms of domain architecture, Globin spans 3–147 (NLTAAEKTQV…VANALAHKYH (145 aa)). Residues His64 and His93 each coordinate heme b.

Belongs to the globin family. As to quaternary structure, heterotetramer of two delta chains and two alpha chains. As to expression, red blood cells.

This Loxodonta africana (African elephant) protein is Hemoglobin subunit delta (HBD).